The primary structure comprises 797 residues: Probable exo-1,4-beta-xylosidase xlnD (797 aa).

The first 20 residues, 1-20 (MPGAASIVAVLAALLPTALG), serve as a signal peptide directing secretion. Asn23, Asn87, Asn142, and Asn237 each carry an N-linked (GlcNAc...) asparagine glycan. The active site involves Asp310. Residues Asn326, Asn391, Asn404, Asn442, Asn479, Asn521, Asn617, Asn644, Asn657, Asn684, and Asn706 are each glycosylated (N-linked (GlcNAc...) asparagine).

Belongs to the glycosyl hydrolase 3 family.

Its subcellular location is the secreted. The enzyme catalyses Hydrolysis of (1-&gt;4)-beta-D-xylans, to remove successive D-xylose residues from the non-reducing termini.. It participates in glycan degradation; xylan degradation. Xylan 1,4-beta-xylosidase involved in the hydrolysis of xylan, a major structural heterogeneous polysaccharide found in plant biomass representing the second most abundant polysaccharide in the biosphere, after cellulose. This is Probable exo-1,4-beta-xylosidase xlnD (xlnD) from Aspergillus flavus (strain ATCC 200026 / FGSC A1120 / IAM 13836 / NRRL 3357 / JCM 12722 / SRRC 167).